The primary structure comprises 110 residues: Hydrogenase maturation factor HypA (110 aa).

H2 is a Ni(2+) binding site. Zn(2+) contacts are provided by C70, C73, C86, and C89.

Belongs to the HypA/HybF family.

Functionally, involved in the maturation of [NiFe] hydrogenases. Required for nickel insertion into the metal center of the hydrogenase. The polypeptide is Hydrogenase maturation factor HypA (Geobacter sulfurreducens (strain ATCC 51573 / DSM 12127 / PCA)).